The chain runs to 937 residues: Isoleucine--tRNA ligase (937 aa).

The short motif at 58–68 is the 'HIGH' region element; the sequence is PYANGDIHIGH. Glutamate 561 contacts L-isoleucyl-5'-AMP. A 'KMSKS' region motif is present at residues 602–606; that stretch reads KMSKS. Position 605 (lysine 605) interacts with ATP. The Zn(2+) site is built by cysteine 900, cysteine 903, cysteine 920, and cysteine 923.

The protein belongs to the class-I aminoacyl-tRNA synthetase family. IleS type 1 subfamily. In terms of assembly, monomer. Zn(2+) serves as cofactor.

It is found in the cytoplasm. It carries out the reaction tRNA(Ile) + L-isoleucine + ATP = L-isoleucyl-tRNA(Ile) + AMP + diphosphate. Catalyzes the attachment of isoleucine to tRNA(Ile). As IleRS can inadvertently accommodate and process structurally similar amino acids such as valine, to avoid such errors it has two additional distinct tRNA(Ile)-dependent editing activities. One activity is designated as 'pretransfer' editing and involves the hydrolysis of activated Val-AMP. The other activity is designated 'posttransfer' editing and involves deacylation of mischarged Val-tRNA(Ile). This Alcanivorax borkumensis (strain ATCC 700651 / DSM 11573 / NCIMB 13689 / SK2) protein is Isoleucine--tRNA ligase.